The chain runs to 322 residues: Probable transcription factor KAN3 (322 aa).

Residues 1-35 (MELFPSQPDLYLKISRRREEEQEKESQELQEQEVE) form a disordered region. The span at 17–35 (RREEEQEKESQELQEQEVE) shows a compositional bias: basic and acidic residues. An HTH myb-type domain is found at 161-221 (GVRAPRMRWT…HLQMYRTIKS (61 aa)). Residues 192 to 217 (PKSVLELMDVQDLTLAHVKSHLQMYR) constitute a DNA-binding region (H-T-H motif). Disordered regions lie at residues 222–244 (TEKPTTSSGQSDCENGSQVNSER) and 267–322 (KASS…NLSP). Polar residues-rich tracts occupy residues 224–241 (KPTTSSGQSDCENGSQVN) and 299–322 (LTGTRPETETPNLDFTLATPNLSP).

In terms of tissue distribution, expressed in developing phloem.

It localises to the nucleus. Probable transcription factor that regulates lateral organ polarity. Plays a role in lateral root formation and development. This Arabidopsis thaliana (Mouse-ear cress) protein is Probable transcription factor KAN3 (KAN3).